The chain runs to 262 residues: Abhydrolase domain-containing protein ACTT2-1 (262 aa).

The Peroxisomal targeting signal type 1 signature appears at 260–262 (SKL).

It belongs to the AB hydrolase superfamily. AKT2 hydrolase family.

The protein localises to the peroxisome. The protein operates within mycotoxin biosynthesis. Its function is as follows. Abhydrolase domain-containing protein; part of the gene clusters that mediate the biosynthesis of the host-selective toxins (HSTs) ACT-toxins responsible for brown spot of tangerine disease by the tangerine pathotype which affects tangerines and mandarins. ACT-toxins consist of three moieties, 9,10-epoxy-8-hydroxy-9-methyl-decatrienoic acid (EDA), valine and a polyketide. ACT-toxin I is toxic to both citrus and pear; toxin II the 5''-deoxy derivative of ACT-toxin I, is highly toxic to pear and slightly toxic to citrus. On cellular level, ACT-toxins affect plasma membrane of susceptible cells and cause a sudden increase in loss of K(+) after a few minutes of toxin treatment. The acyl-CoA ligase ACTT1, the hydrolase ACTT2, the enoyl-CoA hydratases ACTT3 and ACTT6, and the acyl-CoA synthetase ACTT5 are all involved in the biosynthesis of the AK-, AF- and ACT-toxin common 9,10-epoxy-8-hydroxy-9-methyl-decatrienoic acid (EDA) structural moiety. The exact role of each enzyme, and of additional enzymes identified within the AF-toxin clusters have still to be determined. On the other hand, ACTTS1 to ACTTS4 are specific to the tangerine pathotype. The function of ACTTS3 is to elongate the polyketide chain portion of ACT-toxin that is unique to this toxin. The enoyl-reductase ACTTS2 might complement the missing enoyl-reductase (ER) domain in ACTTS3 in the synthesis of the polyketide portion of ACT-toxin. The roles of the nonribosomal peptide synthetases-related proteins ACTTS1 and ACTTS4 have also still not been elucidated. The sequence is that of Abhydrolase domain-containing protein ACTT2-1 from Alternaria alternata (Alternaria rot fungus).